The primary structure comprises 592 residues: V-type ATP synthase alpha chain 1 (592 aa).

Position 233 to 240 (233 to 240) interacts with ATP; the sequence is GPFGSGKT.

The protein belongs to the ATPase alpha/beta chains family.

The catalysed reaction is ATP + H2O + 4 H(+)(in) = ADP + phosphate + 5 H(+)(out). In terms of biological role, produces ATP from ADP in the presence of a proton gradient across the membrane. The V-type alpha chain is a catalytic subunit. In Clostridium tetani (strain Massachusetts / E88), this protein is V-type ATP synthase alpha chain 1.